The following is a 285-amino-acid chain: MIASKETKEKIRNFIGGFASGAASTLAGHPFDTLKVRLQTEGSTGRFRGLAHCFTTTIKEEGFFALYKGVTPPLLGMSIINSCMFGAMNIVKSKIHTDKSTPISLGEIMVSGAITGWIVSFVACPIETVKSKLQVQYTGVKLYNGPIDCIKKIGIRGLYKALIPTGFQRNSLYAYFGCYELAQRYLRREDGSMTMGRSFIAGGIAGTGFWLTNFPFDVIRSRIMTMPYNESPPRYKGMIDCAKHIYRVDGLKGFWKGFSPCLLRTFPANGATFVAYECVMKFFPM.

Topologically, residues 1 to 13 (MIASKETKEKIRN) are mitochondrial intermembrane. Solcar repeat units lie at residues 8-94 (KEKI…VKSK), 103-185 (ISLG…AQRY), and 193-282 (MTMG…VMKF). A helical transmembrane segment spans residues 14 to 34 (FIGGFASGAASTLAGHPFDTL). Residues 35 to 69 (KVRLQTEGSTGRFRGLAHCFTTTIKEEGFFALYKG) lie on the Mitochondrial matrix side of the membrane. Residues 70–90 (VTPPLLGMSIINSCMFGAMNI) traverse the membrane as a helical segment. At 91–102 (VKSKIHTDKSTP) the chain is on the mitochondrial intermembrane side. A helical transmembrane segment spans residues 103 to 123 (ISLGEIMVSGAITGWIVSFVA). Residues 124–156 (CPIETVKSKLQVQYTGVKLYNGPIDCIKKIGIR) are Mitochondrial matrix-facing. A helical membrane pass occupies residues 157-177 (GLYKALIPTGFQRNSLYAYFG). Residues 178 to 198 (CYELAQRYLRREDGSMTMGRS) are Mitochondrial intermembrane-facing. Residues 199–219 (FIAGGIAGTGFWLTNFPFDVI) form a helical membrane-spanning segment. The Mitochondrial matrix segment spans residues 220–256 (RSRIMTMPYNESPPRYKGMIDCAKHIYRVDGLKGFWK). Residues 257-277 (GFSPCLLRTFPANGATFVAYE) form a helical membrane-spanning segment. Residues 278–285 (CVMKFFPM) lie on the Mitochondrial intermembrane side of the membrane.

This sequence belongs to the mitochondrial carrier (TC 2.A.29) family.

The protein localises to the mitochondrion inner membrane. Its function is as follows. Mitochondrial solute carriers shuttle metabolites, nucleotides, and cofactors through the mitochondrial inner membrane. The polypeptide is Mitochondrial substrate carrier family protein L (mcfL) (Dictyostelium discoideum (Social amoeba)).